Here is a 248-residue protein sequence, read N- to C-terminus: Meiotically up-regulated gene 110 protein (248 aa).

The helical transmembrane segment at 23–43 (LRFVFWFSVLIPIFFIALIII) threads the bilayer.

The protein localises to the membrane. Has a role in meiosis. This is Meiotically up-regulated gene 110 protein (mug110) from Schizosaccharomyces pombe (strain 972 / ATCC 24843) (Fission yeast).